The following is a 653-amino-acid chain: Amyloid beta A4 precursor protein-binding family B member 1-interacting protein (653 aa).

The interval 82-141 (NNKSTAPFPPADASNSYHFHPPPMPSIITEDLSLLPPPPEFDPHYPPPPPDPLTEPKTQE) is disordered. The segment covering 116–134 (LPPPPEFDPHYPPPPPDPL) has biased composition (pro residues). The Ras-associating domain maps to 165–253 (KKRIVKVHMI…IHFLEKNEKY (89 aa)). The PH domain occupies 295–404 (VPELEAALYL…WVTGIRIAKY (110 aa)). The segment covering 462-481 (KHGEANKQEKKSSEVNKPET) has biased composition (basic and acidic residues). The tract at residues 462 to 653 (KHGEANKQEK…ALQKKREPPT (192 aa)) is disordered. The span at 585–604 (PAPPPPPPPPAPAANVPPLP) shows a compositional bias: pro residues. Over residues 605-614 (VKKHPPKPPK) the composition is skewed to basic residues.

It belongs to the MRL family.

It localises to the cell membrane. Its subcellular location is the cytoplasm. It is found in the cytoskeleton. Its function is as follows. Appears to function in the signal transduction from Ras activation to actin cytoskeletal remodeling. This is Amyloid beta A4 precursor protein-binding family B member 1-interacting protein (apbb1ip) from Xenopus laevis (African clawed frog).